Reading from the N-terminus, the 954-residue chain is Glycine dehydrogenase (decarboxylating) (954 aa).

Position 701 is an N6-(pyridoxal phosphate)lysine (Lys-701).

This sequence belongs to the GcvP family. As to quaternary structure, the glycine cleavage system is composed of four proteins: P, T, L and H. Pyridoxal 5'-phosphate serves as cofactor.

The catalysed reaction is N(6)-[(R)-lipoyl]-L-lysyl-[glycine-cleavage complex H protein] + glycine + H(+) = N(6)-[(R)-S(8)-aminomethyldihydrolipoyl]-L-lysyl-[glycine-cleavage complex H protein] + CO2. The glycine cleavage system catalyzes the degradation of glycine. The P protein binds the alpha-amino group of glycine through its pyridoxal phosphate cofactor; CO(2) is released and the remaining methylamine moiety is then transferred to the lipoamide cofactor of the H protein. This chain is Glycine dehydrogenase (decarboxylating), found in Bordetella parapertussis (strain 12822 / ATCC BAA-587 / NCTC 13253).